The sequence spans 474 residues: Trichothecene 3-O-acetyltransferase (474 aa).

The protein belongs to the trichothecene 3-O-acetyltransferase family.

In terms of biological role, trichothecene 3-O-acetyltransferase involved in self-protection against trichothecenes, mycotoxins acting as eukaryotic protein synthesis inhibitors. Its existence is surprising in a non-trichothecene producer organism which needs no self-protection again endogenic trichothecenes. The persistence of this non-essential gene may be due to a selective advantage that it may confer, like a resistance to exogenic trichothecenes. In Saccharomyces cerevisiae (strain ATCC 204508 / S288c) (Baker's yeast), this protein is Trichothecene 3-O-acetyltransferase (AYT1).